Reading from the N-terminus, the 362-residue chain is Putative membrane-bound acyltransferase YfiQ (362 aa).

10 consecutive transmembrane segments (helical) span residues 11-31 (CISC…MLQA), 44-64 (FRTL…FLLA), 82-102 (VIFV…TSAM), 119-139 (VFLG…YMLH), 153-173 (WVLS…SAAS), 181-201 (GGAF…FCLA), 220-240 (WVVY…SYVG), 252-267 (IMLY…FHLF), 283-303 (YSFS…VLLL), and 308-328 (IPAV…PIMT).

Belongs to the acyltransferase 3 family.

It is found in the cell membrane. In Bacillus subtilis (strain 168), this protein is Putative membrane-bound acyltransferase YfiQ (yfiQ).